We begin with the raw amino-acid sequence, 372 residues long: SAM domain-containing protein SAMSN-1 (372 aa).

The segment at 1–71 (MLKRKPSNAS…SGGSLGKKVR (71 aa)) is disordered. Positions 20 to 25 (RSSSFG) match the Important for interaction with 14-3-3 proteins motif. Phosphoserine occurs at positions 23 and 34. The span at 37-49 (KSDDSIEVHDREL) shows a compositional bias: basic and acidic residues. Low complexity predominate over residues 52-63 (GSEEQSKTSSSG). A Phosphoserine modification is found at S74. T76 bears the Phosphothreonine mark. Phosphoserine is present on residues S90, S97, and S119. Residues 90–111 (SEEKEEESGEEALPYRNSDPMI) form a disordered region. Residues 129–146 (LYSGQSSSSGITSCSDGT) show a composition bias toward low complexity. The interval 129 to 153 (LYSGQSSSSGITSCSDGTSNRDSFR) is disordered. Y160 is subject to Phosphotyrosine. An SH3 domain is found at 163–224 (PFCGRAKVHT…KFIYVDVILE (62 aa)). One can recognise an SAM domain in the interval 241–305 (ENHQTIQEFL…LSAAESLLDE (65 aa)). The interval 304 to 372 (DEETTVEHEK…QKIAITESSD (69 aa)) is disordered. Residues 317–329 (PLSSNPDILSASQ) show a composition bias toward polar residues.

As to quaternary structure, interacts with FASLG. Interacts with phosphotyrosine containing proteins. Interacts (via SH3 domain) with CTTN. Interacts (phosphorylated at Ser-23) with YWHAB, YWHAE, YWHAG, YWHAH, YWHAZ and SFN. Interacts directly with SAP30 and HDAC1. Identified in a complex with SAP30 and HDAC1. As to expression, detected in spleen and lymph node (at protein level).

It localises to the nucleus. It is found in the cytoplasm. The protein localises to the cell projection. Its subcellular location is the ruffle. Functionally, negative regulator of B-cell activation. Down-regulates cell proliferation (in vitro). Promotes RAC1-dependent membrane ruffle formation and reorganization of the actin cytoskeleton. Regulates cell spreading and cell polarization. Stimulates HDAC1 activity. Regulates LYN activity by modulating its tyrosine phosphorylation. The protein is SAM domain-containing protein SAMSN-1 (Samsn1) of Mus musculus (Mouse).